Reading from the N-terminus, the 572-residue chain is Nucleolin 1 (572 aa).

Disordered regions lie at residues 1 to 312 (MGKA…ESAT) and 488 to 572 (DEAK…FGDE). The segment covering 7 to 21 (KSVAVAVAPAAVPAK) has biased composition (low complexity). The span at 27-38 (KREAEDEIEKAV) shows a compositional bias: basic and acidic residues. Low complexity-rich tracts occupy residues 45–58 (AAAA…PAPK) and 72–81 (KAASSSSGSS). Composition is skewed to acidic residues over residues 82-91 (SEEDSSESEE), 109-122 (SSDE…DDED), 144-156 (SESD…DEDE), 177-191 (DSSE…SDED), 208-222 (STDG…EDED), 235-247 (SDEE…ESSD), and 261-276 (ESSE…EEDE). The span at 300-311 (PASNQSQGTESA) shows a compositional bias: polar residues. 2 RRM domains span residues 311–387 (ATLF…LAHE) and 411–492 (QSIF…EAKP). 2 stretches are compositionally biased toward basic and acidic residues: residues 488-520 (DEAK…DRFG) and 528-545 (GGRD…DGGR). Residues 553–566 (QSRQSAGTASTGKK) are compositionally biased toward polar residues.

It is found in the nucleus. Its subcellular location is the nucleolus. Functionally, involved in pre-rRNA processing and ribosome assembly. This is Nucleolin 1 from Oryza sativa subsp. japonica (Rice).